A 129-amino-acid chain; its full sequence is D-ribose pyranase 1 (129 aa).

His-20 functions as the Proton donor in the catalytic mechanism. Residues Asp-28, His-96, and 118-120 contribute to the substrate site; that span reads YSN.

It belongs to the RbsD / FucU family. RbsD subfamily. In terms of assembly, homodecamer.

The protein localises to the cytoplasm. The catalysed reaction is beta-D-ribopyranose = beta-D-ribofuranose. The protein operates within carbohydrate metabolism; D-ribose degradation; D-ribose 5-phosphate from beta-D-ribopyranose: step 1/2. In terms of biological role, catalyzes the interconversion of beta-pyran and beta-furan forms of D-ribose. This chain is D-ribose pyranase 1, found in Rubrobacter xylanophilus (strain DSM 9941 / JCM 11954 / NBRC 16129 / PRD-1).